The sequence spans 249 residues: tRNA (guanine-N(1)-)-methyltransferase (249 aa).

Residues Gly-113 and 133–138 (LGDFVL) each bind S-adenosyl-L-methionine.

Belongs to the RNA methyltransferase TrmD family. In terms of assembly, homodimer.

It is found in the cytoplasm. It carries out the reaction guanosine(37) in tRNA + S-adenosyl-L-methionine = N(1)-methylguanosine(37) in tRNA + S-adenosyl-L-homocysteine + H(+). Functionally, specifically methylates guanosine-37 in various tRNAs. The protein is tRNA (guanine-N(1)-)-methyltransferase of Leptothrix cholodnii (strain ATCC 51168 / LMG 8142 / SP-6) (Leptothrix discophora (strain SP-6)).